A 454-amino-acid chain; its full sequence is uncharacterized protein (454 aa).

An HNH domain is found at 364 to 405; the sequence is CSRPGCDAPAYHSEVHHVTPWTTTHRTDINDLTLACGPDNRL.

It belongs to the Rv1128c/1148c/1588c/1702c/1945/3466 family.

This is an uncharacterized protein from Mycobacterium tuberculosis (strain ATCC 25618 / H37Rv).